A 179-amino-acid chain; its full sequence is Bifunctional protein PyrR (179 aa).

A PRPP-binding motif is present at residues 100-112 (VILIDDVLFTGRT).

Belongs to the purine/pyrimidine phosphoribosyltransferase family. PyrR subfamily.

The catalysed reaction is UMP + diphosphate = 5-phospho-alpha-D-ribose 1-diphosphate + uracil. Its function is as follows. Regulates the transcription of the pyrimidine nucleotide (pyr) operon in response to exogenous pyrimidines. In terms of biological role, also displays a weak uracil phosphoribosyltransferase activity which is not physiologically significant. The sequence is that of Bifunctional protein PyrR from Mannheimia succiniciproducens (strain KCTC 0769BP / MBEL55E).